We begin with the raw amino-acid sequence, 380 residues long: Outer membrane protein assembly factor BamB (380 aa).

The signal sequence occupies residues 1–18; it reads MVQWKHAALLALALAVVG. The N-palmitoyl cysteine moiety is linked to residue Cys19. Cys19 is lipidated: S-diacylglycerol cysteine.

Belongs to the BamB family. Part of the Bam complex.

It is found in the cell outer membrane. Part of the outer membrane protein assembly complex, which is involved in assembly and insertion of beta-barrel proteins into the outer membrane. This Pseudomonas aeruginosa (strain ATCC 15692 / DSM 22644 / CIP 104116 / JCM 14847 / LMG 12228 / 1C / PRS 101 / PAO1) protein is Outer membrane protein assembly factor BamB.